Consider the following 442-residue polypeptide: D-serine dehydratase (442 aa).

Lys118 carries the post-translational modification N6-(pyridoxal phosphate)lysine.

Belongs to the serine/threonine dehydratase family. DsdA subfamily. In terms of assembly, monomer. Requires pyridoxal 5'-phosphate as cofactor.

It catalyses the reaction D-serine = pyruvate + NH4(+). The protein is D-serine dehydratase of Escherichia coli O157:H7.